Consider the following 331-residue polypeptide: GTP 3',8-cyclase (331 aa).

Positions 9-233 (PFGRRITYLR…VRSSKVTGGP (225 aa)) constitute a Radical SAM core domain. Arg-18 serves as a coordination point for GTP. [4Fe-4S] cluster-binding residues include Cys-25 and Cys-29. Tyr-31 serves as a coordination point for S-adenosyl-L-methionine. Cys-32 is a binding site for [4Fe-4S] cluster. Arg-67 is a binding site for GTP. An S-adenosyl-L-methionine-binding site is contributed by Gly-71. Thr-98 lines the GTP pocket. Position 122 (Ser-122) interacts with S-adenosyl-L-methionine. Lys-159 contributes to the GTP binding site. Met-193 contacts S-adenosyl-L-methionine. The [4Fe-4S] cluster site is built by Cys-257 and Cys-260. Position 262–264 (262–264 (RVR)) interacts with GTP. Cys-274 serves as a coordination point for [4Fe-4S] cluster.

It belongs to the radical SAM superfamily. MoaA family. Monomer and homodimer. It depends on [4Fe-4S] cluster as a cofactor.

The catalysed reaction is GTP + AH2 + S-adenosyl-L-methionine = (8S)-3',8-cyclo-7,8-dihydroguanosine 5'-triphosphate + 5'-deoxyadenosine + L-methionine + A + H(+). The protein operates within cofactor biosynthesis; molybdopterin biosynthesis. Its function is as follows. Catalyzes the cyclization of GTP to (8S)-3',8-cyclo-7,8-dihydroguanosine 5'-triphosphate. The sequence is that of GTP 3',8-cyclase from Ectopseudomonas mendocina (strain ymp) (Pseudomonas mendocina).